The primary structure comprises 399 residues: Homeobox protein ceh-39 (399 aa).

Disordered regions lie at residues 32 to 91 (PEPA…GDTE) and 158 to 187 (AKKS…RPAS). Positions 60-79 (SSMCGSSSSSSSSSYSSGSS) are enriched in low complexity. Residues 205 to 291 (NRQIGDDEEL…VRRALCFMKK (87 aa)) constitute a DNA-binding region (CUT). A DNA-binding region (homeobox) is located at residues 315–374 (SDERIRRFTFTQTQLDSLHTVFQQQDRPNREMQQALSATLKLNRSTVGNFFMNARRRLPK).

This sequence belongs to the CUT homeobox family. In terms of tissue distribution, expressed in hermaphrodite gonads.

The protein localises to the nucleus. It localises to the chromosome. Transcriptional regulator which is involved in the sex determination and X chromosome dosage compensation pathways. Directly binds to 5'-ATTGAT-3' sites in the promoter of sex-determining factor xol-1 to negatively regulate its expression and promote hermaphrodite development. Associates with condensed DNA during mitosis. This Caenorhabditis elegans protein is Homeobox protein ceh-39.